Consider the following 86-residue polypeptide: Polcalcin Nic t 2 (86 aa).

2 EF-hand domains span residues 8–42 and 43–78; these read QDIA…TLGS and VTPE…NRGL. Residues D21, N23, D25, Q27, E32, D56, N58, D60, and E67 each coordinate Ca(2+).

This chain is Polcalcin Nic t 2 (Nict2), found in Nicotiana tabacum (Common tobacco).